Consider the following 527-residue polypeptide: Probable serine/threonine-protein kinase DDB_G0271538 (527 aa).

Over residues 1–10 (MNINFSKDDI) the composition is skewed to basic and acidic residues. Residues 1-24 (MNINFSKDDITGLPKSTKEEDEND) are disordered. The Protein kinase domain maps to 33–294 (LFMDVEIGRG…KIVVEGLKVL (262 aa)). ATP contacts are provided by residues 39–47 (IGRGSFGQV) and K60. The active-site Proton acceptor is the D156. Disordered stretches follow at residues 304–375 (VKGK…ISGS), 422–452 (FTPPPNSKSMMDLKQSSAVDEDEDEDEDDVP), and 485–527 (TALD…KKKL). Positions 313–324 (DPDEDSFIDPND) are enriched in acidic residues. Residues 325 to 359 (DSNNNNNSENNNNNNDNSNENNENNNENNNNSNEN) show a composition bias toward low complexity. A compositionally biased stretch (acidic residues) spans 440–452 (VDEDEDEDEDDVP). Basic residues predominate over residues 512 to 527 (PKKKPNNKNKKKKKKL).

Belongs to the protein kinase superfamily. TKL Ser/Thr protein kinase family.

The catalysed reaction is L-seryl-[protein] + ATP = O-phospho-L-seryl-[protein] + ADP + H(+). It catalyses the reaction L-threonyl-[protein] + ATP = O-phospho-L-threonyl-[protein] + ADP + H(+). The protein is Probable serine/threonine-protein kinase DDB_G0271538 of Dictyostelium discoideum (Social amoeba).